The chain runs to 100 residues: Defensin-like protein 316 (100 aa).

Positions 1–18 (MASHIICYIFCIIKLSCA) are cleaved as a signal peptide. Intrachain disulfides connect C21–C84, C43–C64, and C53–C76.

This sequence belongs to the DEFL family.

It is found in the secreted. This Arabidopsis thaliana (Mouse-ear cress) protein is Defensin-like protein 316.